We begin with the raw amino-acid sequence, 428 residues long: UPF0229 protein YeaH (428 aa).

The segment covering G78–R90 has biased composition (basic and acidic residues). A disordered region spans residues G78–E111. Gly residues predominate over residues Q92–Q103.

It belongs to the UPF0229 family.

The polypeptide is UPF0229 protein YeaH (Salmonella enteritidis PT4 (strain P125109)).